The sequence spans 173 residues: Bifunctional protein PyrR (173 aa).

Residues 93–105 (IILVDDVLYTGRT) carry the PRPP-binding motif.

This sequence belongs to the purine/pyrimidine phosphoribosyltransferase family. PyrR subfamily. As to quaternary structure, homodimer and homohexamer; in equilibrium.

The enzyme catalyses UMP + diphosphate = 5-phospho-alpha-D-ribose 1-diphosphate + uracil. Regulates transcriptional attenuation of the pyrimidine nucleotide (pyr) operon by binding in a uridine-dependent manner to specific sites on pyr mRNA. This disrupts an antiterminator hairpin in the RNA and favors formation of a downstream transcription terminator, leading to a reduced expression of downstream genes. In terms of biological role, also displays a weak uracil phosphoribosyltransferase activity which is not physiologically significant. This chain is Bifunctional protein PyrR, found in Streptococcus equi subsp. zooepidemicus (strain MGCS10565).